A 328-amino-acid polypeptide reads, in one-letter code: Biotin synthase (328 aa).

A Radical SAM core domain is found at 48–275; sequence NRIQLSKLLN…KSHVRLTAGR (228 aa). Cys63, Cys67, and Cys70 together coordinate [4Fe-4S] cluster. Residues Cys107, Cys138, Cys198, and Arg270 each contribute to the [2Fe-2S] cluster site.

This sequence belongs to the radical SAM superfamily. Biotin synthase family. As to quaternary structure, homodimer. It depends on [4Fe-4S] cluster as a cofactor. [2Fe-2S] cluster is required as a cofactor.

It catalyses the reaction (4R,5S)-dethiobiotin + (sulfur carrier)-SH + 2 reduced [2Fe-2S]-[ferredoxin] + 2 S-adenosyl-L-methionine = (sulfur carrier)-H + biotin + 2 5'-deoxyadenosine + 2 L-methionine + 2 oxidized [2Fe-2S]-[ferredoxin]. The protein operates within cofactor biosynthesis; biotin biosynthesis; biotin from 7,8-diaminononanoate: step 2/2. Catalyzes the conversion of dethiobiotin (DTB) to biotin by the insertion of a sulfur atom into dethiobiotin via a radical-based mechanism. The sequence is that of Biotin synthase from Brucella ovis (strain ATCC 25840 / 63/290 / NCTC 10512).